The primary structure comprises 151 residues: Transcriptional regulator MraZ (151 aa).

2 SpoVT-AbrB domains span residues 5 to 52 and 81 to 124; these read ATAV…PLDE and ATEC…SDVE.

Belongs to the MraZ family. In terms of assembly, forms oligomers.

It localises to the cytoplasm. Its subcellular location is the nucleoid. This chain is Transcriptional regulator MraZ, found in Haemophilus influenzae (strain 86-028NP).